Reading from the N-terminus, the 110-residue chain is Inner kinetochore subunit mhf1 (110 aa).

It belongs to the TAF9 family. CENP-S/MHF1 subfamily. As to quaternary structure, the MHF histone-fold complex is a heterotetramer of 2 mhf1-mhf2 heterodimers. Component of the inner kinetochore constitutive centromere-associated network (CCAN) (also known as central kinetochore Sim4 complex in fission yeast), which is composed of at least cnl2, cnp3, cnp20, fta1, fta2, fta3, fta4, fta6, fta7, mal2, mhf1, mhf2, mis6, mis15, mis17, sim4 and wip1.

Its subcellular location is the nucleus. Functionally, component of a FANCM-MHF complex that promotes gene conversion at blocked replication forks, probably by reversal of the stalled fork. FANCM-MHF promotes non-crossover recombination. The chain is Inner kinetochore subunit mhf1 from Schizosaccharomyces pombe (strain 972 / ATCC 24843) (Fission yeast).